The following is an 854-amino-acid chain: Gamma-secretase-activating protein (854 aa).

The protein belongs to the GSAP family. As to quaternary structure, interacts with APP; specifically interacts with the CTF-alpha product of APP. Interacts with the gamma-secretase complex. Post-translationally, the protein is first synthesized as a holoprotein form of 98 kDa and rapidly processed into the gamma-secretase-activating protein 16 kDa C-terminal form, which constitutes the predominant form. Widely expressed.

The protein localises to the golgi apparatus. Its subcellular location is the trans-Golgi network. Regulator of gamma-secretase activity, which specifically activates the production of amyloid-beta protein (amyloid-beta protein 40 and amyloid-beta protein 42), without affecting the cleavage of other gamma-secretase targets such has Notch. The gamma-secretase complex is an endoprotease complex that catalyzes the intramembrane cleavage of integral membrane proteins such as Notch receptors and APP (amyloid-beta precursor protein). Specifically promotes the gamma-cleavage of APP CTF-alpha (also named APP-CTF) by the gamma-secretase complex to generate amyloid-beta, while it reduces the epsilon-cleavage of APP CTF-alpha, leading to a low production of AICD. The chain is Gamma-secretase-activating protein (GSAP) from Homo sapiens (Human).